Reading from the N-terminus, the 20-residue chain is Putative 60 kDa spermidine-binding protein (20 aa).

The tract at residues 1–20 is disordered; sequence SXAAVVEPPETSQNRIAKGE. Residues 10–20 are compositionally biased toward polar residues; the sequence is ETSQNRIAKGE.

As to quaternary structure, dimer of 18 kDa and 60 kDa subunit.

It is found in the microsome membrane. The protein localises to the endoplasmic reticulum membrane. In terms of biological role, may have spermidine-binding activity. This is Putative 60 kDa spermidine-binding protein from Zea mays (Maize).